The primary structure comprises 643 residues: Inorganic pyrophosphatase TTM1 (643 aa).

The N-terminal 15 residues, 1 to 15 (MALDSSVALSPRRRH), are a transit peptide targeting the mitochondrion. The CYTH domain maps to 248–410 (NPTYILKSSK…PHTYIEQIQL (163 aa)). The chain crosses the membrane as a helical span at residues 618-638 (LESSTVPILLGLAIGCVGIFA).

The cofactor is Mg(2+). As to expression, ubiquitously expressed in all tissues, with strong expression detected in senescent leaves.

It localises to the mitochondrion outer membrane. The enzyme catalyses diphosphate + H2O = 2 phosphate + H(+). Its function is as follows. Exhibits pyrophosphatase activity with stronger affinity for pyrophosphate (PPi), moderate affinity for ATP and ADP, and weak affinity for tripolyphosphate (PPPi). No activity observed toward uridine substrate. Positively regulates natural and dark-induced leaf senescence. In Arabidopsis thaliana (Mouse-ear cress), this protein is Inorganic pyrophosphatase TTM1.